The primary structure comprises 427 residues: Amino acid transporter AVT3A (427 aa).

Positions M1 to R35 are disordered. Over M1–K42 the chain is Cytoplasmic. Positions G8–P24 are enriched in low complexity. The helical transmembrane segment at T43–F63 threads the bilayer. Topologically, residues K64–L69 are vacuolar. A helical transmembrane segment spans residues L70–V90. The Cytoplasmic segment spans residues H91–L122. The helical transmembrane segment at V123–V143 threads the bilayer. The Vacuolar portion of the chain corresponds to A144–H157. The chain crosses the membrane as a helical span at residues I158 to L178. Residues N179–H186 lie on the Cytoplasmic side of the membrane. Residues L187–V207 form a helical membrane-spanning segment. The Vacuolar segment spans residues Q208 to S227. The chain crosses the membrane as a helical span at residues V228–P248. Residues L249 to A262 are Cytoplasmic-facing. A helical transmembrane segment spans residues L263 to M283. Residues A284 to G300 lie on the Vacuolar side of the membrane. Residues V301–M321 traverse the membrane as a helical segment. Residues M322–S339 are Cytoplasmic-facing. A helical membrane pass occupies residues V340–F360. Over A361 to D362 the chain is Vacuolar. Residues F363–F383 traverse the membrane as a helical segment. Topologically, residues H384 to R396 are cytoplasmic. The helical transmembrane segment at I397–T417 threads the bilayer. Residues A418–A427 are Vacuolar-facing.

This sequence belongs to the amino acid/polyamine transporter 2 family. Amino acid/auxin permease (AAAP) (TC 2.A.18.8) subfamily. Ubiquitous.

The protein resides in the vacuole membrane. Translocates preferentially neutral amino acids and to a lesser extent aromatic amino acids from the vacuole to the cytoplasm. Requires ATP for function. The polypeptide is Amino acid transporter AVT3A (Arabidopsis thaliana (Mouse-ear cress)).